Reading from the N-terminus, the 812-residue chain is Fibrous sheath CABYR-binding protein (812 aa).

The tract at residues 1 to 66 (MEESDEPEQP…SIGNIPGGKA (66 aa)) is disordered. 6 positions are modified to phosphoserine: Ser25, Ser57, Ser125, Ser133, Ser184, and Ser273. Disordered stretches follow at residues 269–333 (IQAP…PKGT), 367–388 (DSGRAESTTVEEATGEVQPPLS), 424–547 (FEDQ…PPSL), and 672–741 (PAEE…PSVK). Over residues 275 to 286 (AKETSAAETTAK) the composition is skewed to low complexity. Residues 488 to 501 (EVPPLPTEEWPLPP) are compositionally biased toward pro residues. Over residues 502–513 (VTEESPAEVTPP) the composition is skewed to low complexity. Acidic residues predominate over residues 514–528 (ETEEGPIEPAEEGPE).

In terms of assembly, interacts with CABYR.

The protein localises to the cell projection. The protein resides in the cilium. Its subcellular location is the flagellum. Its function is as follows. May be involved in the later stages of fibrous sheath biogenesis. Binds calcium. This chain is Fibrous sheath CABYR-binding protein, found in Rattus norvegicus (Rat).